A 263-amino-acid polypeptide reads, in one-letter code: HTH-type transcriptional repressor NanR (263 aa).

Residues 1–22 (MGLMNAFDSQTEDSSPAIGRNL) form a disordered region. The 69-residue stretch at 30-98 (KKLSEMVEEE…NGERARVSRP (69 aa)) folds into the HTH gntR-type domain. Residues 58–77 (ERELMAFFNVGRPSVREALA) constitute a DNA-binding region (H-T-H motif).

This sequence belongs to the NanR family.

In terms of biological role, transcriptional repressor that controls expression of the genes required for the catabolism of sialic acids. The protein is HTH-type transcriptional repressor NanR of Shigella boydii serotype 4 (strain Sb227).